The chain runs to 683 residues: Elongation factor G 2 (683 aa).

Residues 4–279 enclose the tr-type G domain; the sequence is QQMRNIGIMA…AVVEYLPAPQ (276 aa). GTP-binding positions include 13–20, 77–81, and 131–134; these read AHVDAGKT, DTPGH, and NKMD.

This sequence belongs to the TRAFAC class translation factor GTPase superfamily. Classic translation factor GTPase family. EF-G/EF-2 subfamily.

The protein localises to the cytoplasm. Catalyzes the GTP-dependent ribosomal translocation step during translation elongation. During this step, the ribosome changes from the pre-translocational (PRE) to the post-translocational (POST) state as the newly formed A-site-bound peptidyl-tRNA and P-site-bound deacylated tRNA move to the P and E sites, respectively. Catalyzes the coordinated movement of the two tRNA molecules, the mRNA and conformational changes in the ribosome. The protein is Elongation factor G 2 (fusB) of Treponema pallidum (strain Nichols).